The primary structure comprises 182 residues: Large ribosomal subunit protein uL6 (182 aa).

Belongs to the universal ribosomal protein uL6 family. As to quaternary structure, part of the 50S ribosomal subunit.

In terms of biological role, this protein binds to the 23S rRNA, and is important in its secondary structure. It is located near the subunit interface in the base of the L7/L12 stalk, and near the tRNA binding site of the peptidyltransferase center. The sequence is that of Large ribosomal subunit protein uL6 from Methanococcus maripaludis (strain C6 / ATCC BAA-1332).